A 436-amino-acid polypeptide reads, in one-letter code: ATP-dependent RNA helicase RhlB (436 aa).

The Q motif signature appears at 9 to 37 (QKFADFPLHKEVHQALNEAGFEFCTPIQA). Residues 40–219 (LPILLEKKDI…YDHMNEPEKV (180 aa)) form the Helicase ATP-binding domain. 53 to 60 (AQTGTGKT) is a binding site for ATP. A DEAD box motif is present at residues 165–168 (DEAD). A Helicase C-terminal domain is found at 243–390 (KMPLLLSLLE…VTSYDSDALL (148 aa)). Residues 392-436 (DIPPPVRIHRKPSTHTRNTRDRSSGRPQGGQRNGPRRHDKTRRHS) form a disordered region. Basic residues predominate over residues 425–436 (GPRRHDKTRRHS).

This sequence belongs to the DEAD box helicase family. RhlB subfamily. In terms of assembly, component of the RNA degradosome, which is a multiprotein complex involved in RNA processing and mRNA degradation.

The protein localises to the cytoplasm. It catalyses the reaction ATP + H2O = ADP + phosphate + H(+). DEAD-box RNA helicase involved in RNA degradation. Has RNA-dependent ATPase activity and unwinds double-stranded RNA. This Shewanella pealeana (strain ATCC 700345 / ANG-SQ1) protein is ATP-dependent RNA helicase RhlB.